The primary structure comprises 196 residues: Serine recombinase PinR (196 aa).

Residues 3-143 (RIFAYCRIST…SGIVRARGAG (141 aa)) enclose the Resolvase/invertase-type recombinase catalytic domain. Ser-11 (O-(5'-phospho-DNA)-serine intermediate) is an active-site residue.

This sequence belongs to the site-specific recombinase resolvase family.

The polypeptide is Serine recombinase PinR (pinR) (Escherichia coli (strain K12)).